Consider the following 94-residue polypeptide: Pyrimidine/purine nucleoside phosphorylase (94 aa).

This sequence belongs to the nucleoside phosphorylase PpnP family.

The catalysed reaction is a purine D-ribonucleoside + phosphate = a purine nucleobase + alpha-D-ribose 1-phosphate. It catalyses the reaction adenosine + phosphate = alpha-D-ribose 1-phosphate + adenine. The enzyme catalyses cytidine + phosphate = cytosine + alpha-D-ribose 1-phosphate. It carries out the reaction guanosine + phosphate = alpha-D-ribose 1-phosphate + guanine. The catalysed reaction is inosine + phosphate = alpha-D-ribose 1-phosphate + hypoxanthine. It catalyses the reaction thymidine + phosphate = 2-deoxy-alpha-D-ribose 1-phosphate + thymine. The enzyme catalyses uridine + phosphate = alpha-D-ribose 1-phosphate + uracil. It carries out the reaction xanthosine + phosphate = alpha-D-ribose 1-phosphate + xanthine. Functionally, catalyzes the phosphorolysis of diverse nucleosides, yielding D-ribose 1-phosphate and the respective free bases. Can use uridine, adenosine, guanosine, cytidine, thymidine, inosine and xanthosine as substrates. Also catalyzes the reverse reactions. The polypeptide is Pyrimidine/purine nucleoside phosphorylase (Alcanivorax borkumensis (strain ATCC 700651 / DSM 11573 / NCIMB 13689 / SK2)).